A 120-amino-acid polypeptide reads, in one-letter code: Large ribosomal subunit protein bL19 (120 aa).

Belongs to the bacterial ribosomal protein bL19 family.

In terms of biological role, this protein is located at the 30S-50S ribosomal subunit interface and may play a role in the structure and function of the aminoacyl-tRNA binding site. This is Large ribosomal subunit protein bL19 from Acaryochloris marina (strain MBIC 11017).